The following is a 398-amino-acid chain: 8-amino-7-oxononanoate synthase (398 aa).

The substrate site is built by R22 and R29. Residue 109-110 (GW) participates in pyridoxal 5'-phosphate binding. Substrate is bound at residue H141. Pyridoxal 5'-phosphate-binding positions include S189, 214–217 (DEAH), and 242–245 (TFSK). K245 is subject to N6-(pyridoxal phosphate)lysine. T359 contacts substrate.

Belongs to the class-II pyridoxal-phosphate-dependent aminotransferase family. BioF subfamily. Homodimer. Pyridoxal 5'-phosphate is required as a cofactor.

It carries out the reaction 6-carboxyhexanoyl-[ACP] + L-alanine + H(+) = (8S)-8-amino-7-oxononanoate + holo-[ACP] + CO2. The protein operates within cofactor biosynthesis; biotin biosynthesis. Its function is as follows. Catalyzes the decarboxylative condensation of pimeloyl-[acyl-carrier protein] and L-alanine to produce 8-amino-7-oxononanoate (AON), [acyl-carrier protein], and carbon dioxide. The polypeptide is 8-amino-7-oxononanoate synthase (Gluconacetobacter diazotrophicus (strain ATCC 49037 / DSM 5601 / CCUG 37298 / CIP 103539 / LMG 7603 / PAl5)).